Consider the following 334-residue polypeptide: Glycerol-3-phosphate dehydrogenase [NAD(P)+] (334 aa).

Positions 13, 33, and 106 each coordinate NADPH. Sn-glycerol 3-phosphate contacts are provided by Lys106, Gly137, and Ser139. Residue Ala141 participates in NADPH binding. Positions 192, 245, 255, 256, and 257 each coordinate sn-glycerol 3-phosphate. Lys192 serves as the catalytic Proton acceptor. Arg256 serves as a coordination point for NADPH. Val280 and Glu282 together coordinate NADPH.

It belongs to the NAD-dependent glycerol-3-phosphate dehydrogenase family.

The protein localises to the cytoplasm. It carries out the reaction sn-glycerol 3-phosphate + NAD(+) = dihydroxyacetone phosphate + NADH + H(+). It catalyses the reaction sn-glycerol 3-phosphate + NADP(+) = dihydroxyacetone phosphate + NADPH + H(+). It functions in the pathway membrane lipid metabolism; glycerophospholipid metabolism. Catalyzes the reduction of the glycolytic intermediate dihydroxyacetone phosphate (DHAP) to sn-glycerol 3-phosphate (G3P), the key precursor for phospholipid synthesis. This is Glycerol-3-phosphate dehydrogenase [NAD(P)+] from Chlamydia muridarum (strain MoPn / Nigg).